Reading from the N-terminus, the 383-residue chain is MSVTAPLGFRAAGVAAGIKDGGQRDVAVVINDGPHHSAAAVFTKNRVKAAPVQWSQQAVADGQVRAVVLNSGGANACTGAAGFQDARTTAEHLAAALNDSADRIVVCSTGLIGERLPMPKLLAGVDAAVAEAARDGGLNAADAIRTTDTVSKIAFRRGSGYTIGGMAKGAGMLAPSLATMLSVLTTDAVLTPEQCTALLRAATEVTFDRLDTDGCTSTNDTVVLMASGASGTTPDEAEFSRLLTEVCQDLCRQLLADAEGATKAIAIEVVGAASTDDAVTVGRAIARNALFKCAIYGEDPNWGRVLAAVGTTDAVFEPDNINVAINGVWVCRGGSVGDDRAKVNLKPRDVTVTVDLSAGSASATVWTTDLTVDYVHENSAYST.

Substrate-binding residues include T146, K168, T179, E259, N378, and T383. Residue T179 is the Nucleophile of the active site.

This sequence belongs to the ArgJ family. Heterotetramer of two alpha and two beta chains.

It localises to the cytoplasm. The catalysed reaction is N(2)-acetyl-L-ornithine + L-glutamate = N-acetyl-L-glutamate + L-ornithine. It carries out the reaction L-glutamate + acetyl-CoA = N-acetyl-L-glutamate + CoA + H(+). It functions in the pathway amino-acid biosynthesis; L-arginine biosynthesis; L-ornithine and N-acetyl-L-glutamate from L-glutamate and N(2)-acetyl-L-ornithine (cyclic): step 1/1. It participates in amino-acid biosynthesis; L-arginine biosynthesis; N(2)-acetyl-L-ornithine from L-glutamate: step 1/4. Catalyzes two activities which are involved in the cyclic version of arginine biosynthesis: the synthesis of N-acetylglutamate from glutamate and acetyl-CoA as the acetyl donor, and of ornithine by transacetylation between N(2)-acetylornithine and glutamate. The chain is Arginine biosynthesis bifunctional protein ArgJ from Thermobifida fusca (strain YX).